Here is a 244-residue protein sequence, read N- to C-terminus: Tubulin-folding cofactor B (244 aa).

Methionine 1 bears the N-acetylmethionine mark. The residue at position 65 (serine 65) is a Phosphoserine; by PAK1. Tyrosine 98 carries the phosphotyrosine modification. Serine 110 bears the Phosphoserine mark. Serine 128 carries the post-translational modification Phosphoserine; by PAK1. A CAP-Gly domain is found at 183 to 225; the sequence is GLTDFKPGYWVGVRYDEPLGKNDGSVNGKRYFECQAKYGAFVK. Lysine 219 bears the N6-acetyllysine mark.

It belongs to the TBCB family. In terms of assembly, supercomplex made of cofactors A to E. Cofactors A and D function by capturing and stabilizing tubulin in a quasi-native conformation. Cofactor E binds to the cofactor D-tubulin complex; interaction with cofactor C then causes the release of tubulin polypeptides that are committed to the native state. Cofactors B and E can form a heterodimer which binds to alpha-tubulin and enhances their ability to dissociate tubulin heterodimers. Interacts with GAN. Interacts with DCTN1. Phosphorylation by PAK1 is required for normal function. Post-translationally, ubiquitinated in the presence of GAN which targets it for degradation by the proteasome. In terms of tissue distribution, widely expressed with highest levels in brain. Broadly distributed throughout the neonate brain but restricted mainly to ependymary cells in the adult brain where it is concentrated in the cilia.

It is found in the cytoplasm. Its subcellular location is the cytoskeleton. Its function is as follows. Binds to alpha-tubulin folding intermediates after their interaction with cytosolic chaperonin in the pathway leading from newly synthesized tubulin to properly folded heterodimer. Involved in regulation of tubulin heterodimer dissociation. May function as a negative regulator of axonal growth. The sequence is that of Tubulin-folding cofactor B (Tbcb) from Mus musculus (Mouse).